The sequence spans 346 residues: Glucose-6-phosphatase 3 (346 aa).

The Lumenal portion of the chain corresponds to Met1–Asn24. A helical transmembrane segment spans residues Val25–Ala45. Over Ala46–Gly54 the chain is Cytoplasmic. Residues Ile55–Leu75 form a helical membrane-spanning segment. Over Phe76–Pro108 the chain is Lumenal. Arg79 provides a ligand contact to substrate. The helical transmembrane segment at Gly109–Val129 threads the bilayer. Residue His114 is the Proton donor of the active site. Topologically, residues Ser130–Arg140 are cytoplasmic. The chain crosses the membrane as a helical span at residues Trp141 to Val162. Arg161 serves as a coordination point for substrate. The Lumenal segment spans residues Phe163–His167. The active-site Nucleophile is His167. A helical membrane pass occupies residues Phe168–Met186. The Cytoplasmic segment spans residues Thr187–Ser197. Residues Phe198–Phe218 form a helical membrane-spanning segment. Over Thr219–Asp254 the chain is Lumenal. A helical membrane pass occupies residues Ser255–Val273. The Cytoplasmic segment spans residues Arg274–Lys283. The helical transmembrane segment at Leu284–Pro304 threads the bilayer. The Lumenal segment spans residues Gln305–Ser307. The chain crosses the membrane as a helical span at residues Leu308–Val328. Topologically, residues Pro329 to Ser346 are cytoplasmic.

The protein belongs to the glucose-6-phosphatase family.

Its subcellular location is the endoplasmic reticulum membrane. The enzyme catalyses D-glucose 6-phosphate + H2O = D-glucose + phosphate. Its pathway is carbohydrate biosynthesis; gluconeogenesis. Inhibited by vanadate. Functionally, hydrolyzes glucose-6-phosphate to glucose in the endoplasmic reticulum. May form with the glucose-6-phosphate transporter (SLC37A4/G6PT) a ubiquitously expressed complex responsible for glucose production through glycogenolysis and gluconeogenesis. Probably required for normal neutrophil function. This chain is Glucose-6-phosphatase 3 (G6PC3), found in Bos taurus (Bovine).